We begin with the raw amino-acid sequence, 427 residues long: Hydroxylamine reductase (427 aa).

The [4Fe-4S] cluster site is built by cysteine 3, cysteine 6, cysteine 15, and cysteine 21. The hybrid [4Fe-2O-2S] cluster site is built by histidine 129, glutamate 153, cysteine 197, cysteine 283, cysteine 311, cysteine 336, glutamate 370, and lysine 372. Cysteine 283 bears the Cysteine persulfide mark.

Belongs to the HCP family. [4Fe-4S] cluster serves as cofactor. Hybrid [4Fe-2O-2S] cluster is required as a cofactor.

The protein localises to the cytoplasm. The enzyme catalyses A + NH4(+) + H2O = hydroxylamine + AH2 + H(+). In terms of biological role, catalyzes the reduction of hydroxylamine to form NH(3) and H(2)O. This is Hydroxylamine reductase from Moorella thermoacetica (strain ATCC 39073 / JCM 9320).